A 64-amino-acid chain; its full sequence is Temporin-ALe (64 aa).

Positions 1–22 (MFTLKKSLLLLFFLGTINLSLC) are cleaved as a signal peptide. Positions 23 to 47 (EQERNAEEERRDEPDERNAEVEKRF) are excised as a propeptide. L62 carries the leucine amide modification.

In terms of tissue distribution, expressed by the skin glands.

It localises to the secreted. Its function is as follows. Antimicrobial peptide with activity against Gram-positive and Gram-negative bacteria and against fungi. Has been tested against S.aureus (MIC=1.25 ug/mL), B.pumilus (MIC=5.0 ug/mL), B.cereus (MIC=15.0 ug/mL), E.coli (MIC=1.25 ug/mL), B.dysenteriae (MIC=5.0 ug/mL), A.cacoaceticus (MIC=15.0 ug/mL), P.aeruginosa (MIC=5.0 ug/mL) and C.albicans (MIC=1.25 ug/mL). Also shows a weak hemolytic activity. The chain is Temporin-ALe from Amolops loloensis (Lolokou Sucker Frog).